We begin with the raw amino-acid sequence, 330 residues long: MAAVDSFYLLYREIARSCNCYMEALALVGAWYTARKSITVICDFYSLIRLHFIPRLGSRADLIKQYGRWAVVSGATDGIGRAYAEELASRGLNIILISRNEEKLQVVAKDIADTYKVETGIIVADFSSGREIYLPIREALKDKDIGILVNNVGVFYPYPQYFTQLSEDKLWDIINVNIAAASLMVHVVLPGMVERKKGAIVTISSGSCCKPTPQLAAFSASKAYLDHFSRALQYEYASKGIFVQSLIPFYVATSMTAPSSFLHRCSWLVPSPKVYAHHAVSTLGISKRTTGYWSHSIQFLFAQYMPEWLWVWGANILNRSLRKEALSCTA.

Residue Ala2 is modified to N-acetylalanine. Positions 2–82 (AAVDSFYLLY…SGATDGIGRA (81 aa)) are required for mitochondria translocation. NADP(+) is bound by residues 74-80 (GATDGIG), Asp125, and Lys222.

Belongs to the short-chain dehydrogenases/reductases (SDR) family. 17-beta-HSD 3 subfamily. As to quaternary structure, interacts with STYXL1.

Its subcellular location is the mitochondrion. The chain is Inactive hydroxysteroid dehydrogenase-like protein 1 (HSDL1) from Pongo abelii (Sumatran orangutan).